Here is a 473-residue protein sequence, read N- to C-terminus: Photosystem II CP43 reaction center protein (473 aa).

Residues 1 to 14 (MKTLYSLRRFYHVE) constitute a propeptide that is removed on maturation. The residue at position 15 (threonine 15) is an N-acetylthreonine. A Phosphothreonine modification is found at threonine 15. 5 helical membrane-spanning segments follow: residues 69–93 (LFEV…PHLA), 134–155 (LLGP…KDRN), 178–200 (KASY…RKIT), 255–275 (KPFA…LSYS), and 291–312 (WFNN…ASQA). Residue glutamate 367 participates in [CaMn4O5] cluster binding. A helical transmembrane segment spans residues 447 to 471 (RARAAAAGFEKGIDRDFEPVLSMTP).

Belongs to the PsbB/PsbC family. PsbC subfamily. In terms of assembly, PSII is composed of 1 copy each of membrane proteins PsbA, PsbB, PsbC, PsbD, PsbE, PsbF, PsbH, PsbI, PsbJ, PsbK, PsbL, PsbM, PsbT, PsbX, PsbY, PsbZ, Psb30/Ycf12, at least 3 peripheral proteins of the oxygen-evolving complex and a large number of cofactors. It forms dimeric complexes. It depends on Binds multiple chlorophylls and provides some of the ligands for the Ca-4Mn-5O cluster of the oxygen-evolving complex. It may also provide a ligand for a Cl- that is required for oxygen evolution. PSII binds additional chlorophylls, carotenoids and specific lipids. as a cofactor.

The protein localises to the plastid. It localises to the chloroplast thylakoid membrane. In terms of biological role, one of the components of the core complex of photosystem II (PSII). It binds chlorophyll and helps catalyze the primary light-induced photochemical processes of PSII. PSII is a light-driven water:plastoquinone oxidoreductase, using light energy to abstract electrons from H(2)O, generating O(2) and a proton gradient subsequently used for ATP formation. The sequence is that of Photosystem II CP43 reaction center protein from Cicer arietinum (Chickpea).